The primary structure comprises 221 residues: Interleukin-12 subunit alpha (221 aa).

An N-terminal signal peptide occupies residues 1 to 25 (MCPLRSLLLLSTLVLLHHLPHLSLG). 3 cysteine pairs are disulfide-bonded: Cys-39–Cys-112, Cys-66–Cys-198, and Cys-87–Cys-125. N-linked (GlcNAc...) asparagine glycans are attached at residues Asn-41 and Asn-95.

The protein belongs to the IL-6 superfamily. As to quaternary structure, heterodimer with IL12B; disulfide-linked. This heterodimer is known as interleukin IL-12. Heterodimer with EBI3/IL27B; not disulfide-linked. This heterodimer is known as interleukin IL-35. Interacts with NBR1; this interaction promotes IL-12 secretion.

The protein localises to the secreted. Functionally, heterodimerizes with IL12B to form the IL-12 cytokine or with EBI3/IL27B to form the IL-35 cytokine. IL-12 is primarily produced by professional antigen-presenting cells (APCs) such as B-cells and dendritic cells (DCs) as well as macrophages and granulocytes and regulates T-cell and natural killer-cell responses, induces the production of interferon-gamma (IFN-gamma), favors the differentiation of T-helper 1 (Th1) cells and is an important link between innate resistance and adaptive immunity. Mechanistically, exerts its biological effects through a receptor composed of IL12R1 and IL12R2 subunits. Binding to the receptor results in the rapid tyrosine phosphorylation of a number of cellular substrates including the JAK family kinases TYK2 and JAK2. In turn, recruited STAT4 gets phosphorylated and translocates to the nucleus where it regulates cytokine/growth factor responsive genes. As part of IL-35, plays essential roles in maintaining the immune homeostasis of the liver microenvironment and also functions as an immune-suppressive cytokine. Mediates biological events through unconventional receptors composed of IL12RB2 and gp130/IL6ST heterodimers or homodimers. Signaling requires the transcription factors STAT1 and STAT4, which form a unique heterodimer that binds to distinct DNA sites. This chain is Interleukin-12 subunit alpha (IL12A), found in Cervus elaphus (Red deer).